The chain runs to 81 residues: HssA/B-like protein 5 (81 aa).

The protein belongs to the hssA/B family.

The polypeptide is HssA/B-like protein 5 (hssl5) (Dictyostelium discoideum (Social amoeba)).